Consider the following 481-residue polypeptide: Protein DETOXIFICATION 12 (481 aa).

The next 12 membrane-spanning stretches (helical) occupy residues 38–58 (LIFFAAPMAAVVIAQFMLQIV), 76–96 (LASSFCNVTGFSFIIGLSCAL), 117–137 (YTAMFCLALVCLPLSLIWFNM), 154–174 (AGKYATWLIPGLFAYAVLQPL), 187–207 (LLITSYVVFCIHVPLCWFLVY), 214–234 (LGGALAISLSNWLYAIFLGSF), 267–287 (AAMICLEWWSYELIILLSGLL), 296–316 (VLSVCLQTISTMYSIPLAIAA), 336–356 (IVVYAAMSLAVIDALIVSMSL), 380–400 (MAPLVSISLMLDALQGVLSGI), 415–435 (LGAFYLWGIPIAASLAFWIHL), and 438–458 (VGLWIGIQAGAVLQTLLLALV).

It belongs to the multi antimicrobial extrusion (MATE) (TC 2.A.66.1) family.

The protein localises to the membrane. This Arabidopsis thaliana (Mouse-ear cress) protein is Protein DETOXIFICATION 12.